A 337-amino-acid chain; its full sequence is S-adenosylmethionine:tRNA ribosyltransferase-isomerase (337 aa).

It belongs to the QueA family. Monomer.

It is found in the cytoplasm. The catalysed reaction is 7-aminomethyl-7-carbaguanosine(34) in tRNA + S-adenosyl-L-methionine = epoxyqueuosine(34) in tRNA + adenine + L-methionine + 2 H(+). The protein operates within tRNA modification; tRNA-queuosine biosynthesis. Transfers and isomerizes the ribose moiety from AdoMet to the 7-aminomethyl group of 7-deazaguanine (preQ1-tRNA) to give epoxyqueuosine (oQ-tRNA). In Legionella pneumophila (strain Corby), this protein is S-adenosylmethionine:tRNA ribosyltransferase-isomerase.